A 304-amino-acid chain; its full sequence is Homoserine kinase (304 aa).

91–101 lines the ATP pocket; it reads PLGKGMGSSAA.

This sequence belongs to the GHMP kinase family. Homoserine kinase subfamily.

It localises to the cytoplasm. The enzyme catalyses L-homoserine + ATP = O-phospho-L-homoserine + ADP + H(+). Its pathway is amino-acid biosynthesis; L-threonine biosynthesis; L-threonine from L-aspartate: step 4/5. In terms of biological role, catalyzes the ATP-dependent phosphorylation of L-homoserine to L-homoserine phosphate. The protein is Homoserine kinase of Solibacter usitatus (strain Ellin6076).